A 230-amino-acid chain; its full sequence is Cytidylate kinase (230 aa).

12–20 serves as a coordination point for ATP; the sequence is GPSGAGKGT.

This sequence belongs to the cytidylate kinase family. Type 1 subfamily.

The protein resides in the cytoplasm. The catalysed reaction is CMP + ATP = CDP + ADP. The enzyme catalyses dCMP + ATP = dCDP + ADP. The protein is Cytidylate kinase of Aeromonas salmonicida (strain A449).